Consider the following 151-residue polypeptide: Ubiquitin-conjugating enzyme E2 W (151 aa).

Met1 is covalently cross-linked (Peptide (Met-Gly) (interchain with G-Cter in ubiquitin)). One can recognise a UBC core domain in the interval Ser3–Cys151. The active-site Glycyl thioester intermediate is the Cys91.

The protein belongs to the ubiquitin-conjugating enzyme family. In terms of assembly, homodimer. Interacts with FANCL. Interacts with STUB1/CHIP. Post-translationally, ubiquitinated in vitro in the presence of FANCL. Autoubiquitinated at Met-1.

It is found in the nucleus. It catalyses the reaction S-ubiquitinyl-[E1 ubiquitin-activating enzyme]-L-cysteine + [E2 ubiquitin-conjugating enzyme]-L-cysteine = [E1 ubiquitin-activating enzyme]-L-cysteine + S-ubiquitinyl-[E2 ubiquitin-conjugating enzyme]-L-cysteine.. The enzyme catalyses S-ubiquitinyl-[E1 ubiquitin-activating enzyme]-L-cysteine + [acceptor protein]-N-terminal-amino acid = [E1 ubiquitin-activating enzyme]-L-cysteine + N-terminal-ubiquitinyl-[acceptor protein].. It participates in protein modification; protein ubiquitination. In terms of biological role, accepts ubiquitin from the E1 complex and catalyzes its covalent attachment to other proteins. Specifically monoubiquitinates the N-terminus of various substrates, including ATXN3, MAPT/TAU, POLR2H/RPB8 and STUB1/CHIP, by recognizing backbone atoms of disordered N-termini. Involved in degradation of misfolded chaperone substrates by mediating monoubiquitination of STUB1/CHIP, leading to recruitment of ATXN3 to monoubiquitinated STUB1/CHIP, and restriction of the length of ubiquitin chain attached to STUB1/CHIP substrates by ATXN3. After UV irradiation, but not after mitomycin-C (MMC) treatment, acts as a specific E2 ubiquitin-conjugating enzyme for the Fanconi anemia complex by associating with E3 ubiquitin-protein ligase FANCL and catalyzing monoubiquitination of FANCD2, a key step in the DNA damage pathway. In vitro catalyzes 'Lys-11'-linked polyubiquitination. UBE2W-catalyzed ubiquitination also occurs in the presence of inactive RING/U-box type E3s, i.e. lacking the active site cysteine residues to form thioester bonds with ubiquitin, or even in the absence of E3, albeit at a slower rate. This is Ubiquitin-conjugating enzyme E2 W (UBE2W) from Bos taurus (Bovine).